We begin with the raw amino-acid sequence, 281 residues long: uncharacterized protein (281 aa).

Transmembrane regions (helical) follow at residues 23 to 45, 65 to 87, and 94 to 116; these read LLLS…FFAA, IANF…ASLG, and TSVI…GSLS.

It belongs to the MscS (TC 1.A.23) family.

It is found in the cell membrane. This is an uncharacterized protein from Buchnera aphidicola subsp. Baizongia pistaciae (strain Bp).